The following is a 596-amino-acid chain: Pescadillo homolog (596 aa).

In terms of domain architecture, BRCT spans 347-440 (PTSTLFSEFV…ELVPANLYLP (94 aa)). Residues 449 to 552 (SPWGDSVGYD…EEKDLKLIMM (104 aa)) form a disordered region. The stretch at 460–596 (AAELAEEEAE…TKAKLKKLEN (137 aa)) forms a coiled coil. Over residues 463 to 500 (LAEEEAESEEEEEVSDEAEGDEEATLAAEEDEEDEAEA) the composition is skewed to acidic residues. Over residues 501–510 (EELRAQKELE) the composition is skewed to basic and acidic residues. Residues 519–529 (SEAADSAAPSK) are compositionally biased toward low complexity.

This sequence belongs to the pescadillo family. As to quaternary structure, component of the NOP7 complex, composed of ERB1, NOP7 and YTM1. The complex is held together by ERB1, which interacts with NOP7 via its N-terminal domain and with YTM1 via a high-affinity interaction between the seven-bladed beta-propeller domains of the 2 proteins. The NOP7 complex associates with the 66S pre-ribosome.

It is found in the nucleus. Its subcellular location is the nucleolus. The protein resides in the nucleoplasm. Component of the NOP7 complex, which is required for maturation of the 25S and 5.8S ribosomal RNAs and formation of the 60S ribosome. The polypeptide is Pescadillo homolog (Eremothecium gossypii (strain ATCC 10895 / CBS 109.51 / FGSC 9923 / NRRL Y-1056) (Yeast)).